The primary structure comprises 337 residues: Aspartate-semialdehyde dehydrogenase 2 (337 aa).

Residues 13–16 (TGAV) and 41–42 (RS) each bind NADP(+). Arg-101 is a binding site for phosphate. The Acyl-thioester intermediate role is filled by Cys-132. Gln-159 provides a ligand contact to substrate. 162-163 (SG) lines the NADP(+) pocket. A phosphate-binding site is contributed by Lys-216. Arg-238 lines the substrate pocket. His-245 (proton acceptor) is an active-site residue. Residue Asn-316 coordinates NADP(+).

This sequence belongs to the aspartate-semialdehyde dehydrogenase family. In terms of assembly, homodimer.

The enzyme catalyses L-aspartate 4-semialdehyde + phosphate + NADP(+) = 4-phospho-L-aspartate + NADPH + H(+). It functions in the pathway amino-acid biosynthesis; L-lysine biosynthesis via DAP pathway; (S)-tetrahydrodipicolinate from L-aspartate: step 2/4. Its pathway is amino-acid biosynthesis; L-methionine biosynthesis via de novo pathway; L-homoserine from L-aspartate: step 2/3. It participates in amino-acid biosynthesis; L-threonine biosynthesis; L-threonine from L-aspartate: step 2/5. Its function is as follows. Catalyzes the NADPH-dependent formation of L-aspartate-semialdehyde (L-ASA) by the reductive dephosphorylation of L-aspartyl-4-phosphate. This Vibrio cholerae serotype O1 (strain ATCC 39315 / El Tor Inaba N16961) protein is Aspartate-semialdehyde dehydrogenase 2 (asd2).